Here is a 285-residue protein sequence, read N- to C-terminus: Shikimate dehydrogenase (NADP(+)) (285 aa).

Shikimate contacts are provided by residues 20–22 (SIS) and S67. The active-site Proton acceptor is the K71. An NADP(+)-binding site is contributed by E83. Shikimate is bound by residues N92 and D107. Residues 129-133 (GAGGA) and M227 each bind NADP(+). Y229 contributes to the shikimate binding site. G250 is a binding site for NADP(+).

It belongs to the shikimate dehydrogenase family. In terms of assembly, homodimer.

It catalyses the reaction shikimate + NADP(+) = 3-dehydroshikimate + NADPH + H(+). It participates in metabolic intermediate biosynthesis; chorismate biosynthesis; chorismate from D-erythrose 4-phosphate and phosphoenolpyruvate: step 4/7. In terms of biological role, involved in the biosynthesis of the chorismate, which leads to the biosynthesis of aromatic amino acids. Catalyzes the reversible NADPH linked reduction of 3-dehydroshikimate (DHSA) to yield shikimate (SA). The polypeptide is Shikimate dehydrogenase (NADP(+)) (Streptococcus gordonii (strain Challis / ATCC 35105 / BCRC 15272 / CH1 / DL1 / V288)).